Here is a 124-residue protein sequence, read N- to C-terminus: Ribonuclease P protein component (124 aa).

The protein belongs to the RnpA family. In terms of assembly, consists of a catalytic RNA component (M1 or rnpB) and a protein subunit.

The enzyme catalyses Endonucleolytic cleavage of RNA, removing 5'-extranucleotides from tRNA precursor.. In terms of biological role, RNaseP catalyzes the removal of the 5'-leader sequence from pre-tRNA to produce the mature 5'-terminus. It can also cleave other RNA substrates such as 4.5S RNA. The protein component plays an auxiliary but essential role in vivo by binding to the 5'-leader sequence and broadening the substrate specificity of the ribozyme. This Mycolicibacterium gilvum (strain PYR-GCK) (Mycobacterium gilvum (strain PYR-GCK)) protein is Ribonuclease P protein component.